The sequence spans 350 residues: m7GpppX diphosphatase (350 aa).

Ser2 bears the N-acetylserine mark. Ser60 is subject to Phosphoserine. Residue Thr66 is modified to Phosphothreonine. At Thr66 the chain carries Phosphothreonine; by YAK1. Residue Tyr70 is modified to Phosphotyrosine. Residue Thr120 is modified to Phosphothreonine. Substrate is bound by residues Glu171, Lys196, and 259–270; that span reads HYQPSYYHFHIH. Residues 266–270 carry the Histidine triad motif motif; it reads HFHIH. The active-site Nucleophile is His268.

Belongs to the HIT family. In terms of assembly, homodimer. Forms heterodimer with DCS2; the interaction inhibits the DCS1 scavenger decapping activity during post-diauxic growth. In terms of processing, phosphorylated. Phosphorylation occurs upon glucose deprivation.

The protein localises to the cytoplasm. Its subcellular location is the perinuclear region. It localises to the P-body. It catalyses the reaction a 5'-end (N(7)-methyl 5'-triphosphoguanosine)-ribonucleoside in mRNA + H2O = N(7)-methyl-GMP + a 5'-end diphospho-ribonucleoside in mRNA + 2 H(+). Its activity is regulated as follows. The hydrolytic product 7-methylguanosine diphosphate (m7GDP) efficiently inhibits the decapping scavenger activity and acts as a competitive inhibitor in vitro. Its function is as follows. Decapping scavenger enzyme that catalyzes the cleavage of a residual cap structure following the degradation of mRNAs by the 3'-&gt;5' exosome-mediated mRNA decay pathway. Hydrolyzes cap analog structures like 7-methylguanosine nucleoside triphosphate (m7GpppG) and tri-methyl guanosine nucleoside triphosphate (m3(2,2,7)GpppG) with up to 10 nucleotide substrates (small capped oligoribonucleotides) and specifically releases 5'-phosphorylated RNA fragments and 7-methylguanosine monophosphate (m7GMP) or tri-methyl guanosine nucleoside monophosphate (m3(2,2,7)GMP), respectively. Does not hydrolyze unmethylated cap analog (GpppG) and shows no decapping activity on intact m7GpppG-capped mRNA molecules longer than 25 nucleotides. Does not hydrolyze 7-methylguanosine diphosphate (m7GDP) and tri-methylguanosine diphosphate (m3(2,2,7)GDP) to (m(7)GMP) and m3(2,2,7)GMP, respectively. May also play a role in the 5'-&gt;3 mRNA decay pathway; m7GDP, the downstream product released by the 5'-&gt;3' mRNA mediated decapping activity, may be also converted by DCS1 to m7GMP. Binds to m7GpppG and strongly to m7GDP. May also regulate the 5'-&gt;3' exoribonucleolytic mRNA decay pathway in a cap-independent manner. Negatively regulates trehalase activity. The sequence is that of m7GpppX diphosphatase from Saccharomyces cerevisiae (strain ATCC 204508 / S288c) (Baker's yeast).